Here is a 702-residue protein sequence, read N- to C-terminus: Solute carrier organic anion transporter family member 1B3 (702 aa).

Topologically, residues 1–28 (MDQHQHLNKTAESASSEKKKTRRCNGFK) are cytoplasmic. Residues 29 to 48 (MFLAALSFSYIAKALGGIIM) traverse the membrane as a helical segment. The Extracellular portion of the chain corresponds to 49–67 (KISITQIERRFDISSSLAG). A helical transmembrane segment spans residues 68–88 (LIDGSFEIGNLLVIVFVSYFG). Topologically, residues 89–94 (SKLHRP) are cytoplasmic. A helical transmembrane segment spans residues 95–119 (KLIGIGCLLMGTGSILTSLPHFFMG). Residues 120–168 (YYRYSKETHINPSENSTSSLSTCLINQTLSFNGTSPEIVEKDCVKESGS) lie on the Extracellular side of the membrane. Residues Asn134, Asn145, and Asn151 are each glycosylated (N-linked (GlcNAc...) asparagine). Residues 169-197 (HMWIYVFMGNMLRGIGETPIVPLGISYID) traverse the membrane as a helical segment. At 198-216 (DFAKEGHSSLYLGSLNAIG) the chain is on the cytoplasmic side. A helical transmembrane segment spans residues 217–237 (MIGPVIGFALGSLFAKMYVDI). The Extracellular segment spans residues 238–255 (GYVDLSTIRITPKDSRWV). Residues 256-280 (GAWWLGFLVSGLFSIISSIPFFFLP) traverse the membrane as a helical segment. Over 281-331 (KNPNKPQKERKISLSLHVLKTNDDRNQTANLTNQGKNVTKNVTGFFQSLKS) the chain is Cytoplasmic. Ser293 and Ser295 each carry phosphoserine. A helical membrane pass occupies residues 332–353 (ILTNPLYVIFLLLTLLQVSSFI). Residues 354–373 (GSFTYVFKYMEQQYGQSASH) lie on the Extracellular side of the membrane. A helical membrane pass occupies residues 374–397 (ANFLLGIITIPTVATGMFLGGFII). The Cytoplasmic segment spans residues 398–401 (KKFK). A helical transmembrane segment spans residues 402 to 425 (LSLVGIAKFSFLTSMISFLFQLLY). At 426–537 (FPLICESKSV…NTCTRKFFIY (112 aa)) the chain is on the extracellular side. Asn445 carries an N-linked (GlcNAc...) asparagine glycan. In terms of domain architecture, Kazal-like spans 453 to 508 (DVPLSYCNSECNCDESQWEPVCGNNGITYLSPCLAGCKSSSGIKKHTVFYNCSCVE). Intrachain disulfides connect Cys459–Cys489, Cys465–Cys485, and Cys474–Cys506. Residues Asn503 and Asn516 are each glycosylated (N-linked (GlcNAc...) asparagine). A helical membrane pass occupies residues 538 to 560 (VAIQVINSLFSATGGTTFILLTV). The Cytoplasmic portion of the chain corresponds to 561–569 (KIVQPELKA). Residues 570–595 (LAMGFQSMVIRTLGGILAPIYFGALI) traverse the membrane as a helical segment. At 596 to 629 (DKTCMKWSTNSCGAQGACRIYNSVFFGRVYLGLS) the chain is on the extracellular side. The helical transmembrane segment at 630–647 (IALRFPALVLYIVFIFAM) threads the bilayer. The Cytoplasmic segment spans residues 648-695 (KKKFQGKDTKASDNERKVMDEANLEFLNNGEHFVPSAGTDSKTCNLDM). Ser683 bears the Phosphoserine mark.

The protein belongs to the organo anion transporter (TC 2.A.60) family. In terms of processing, N-glycosylated. Highly expressed in liver, in particular at the basolateral membrane of hepatocytes near the central vein. Expressed in the placenta. In testis, primarily localized to the basal membrane of Sertoli cells and weakly expressed in Leydig cells and within the tubules.

The protein resides in the basolateral cell membrane. It is found in the basal cell membrane. It carries out the reaction estrone 3-sulfate(out) + hydrogencarbonate(in) = estrone 3-sulfate(in) + hydrogencarbonate(out). The catalysed reaction is 17beta-estradiol 17-O-(beta-D-glucuronate)(out) = 17beta-estradiol 17-O-(beta-D-glucuronate)(in). The enzyme catalyses taurocholate(out) = taurocholate(in). It catalyses the reaction estrone 3-sulfate(out) = estrone 3-sulfate(in). It carries out the reaction dehydroepiandrosterone 3-sulfate(out) = dehydroepiandrosterone 3-sulfate(in). The catalysed reaction is leukotriene C4(out) = leukotriene C4(in). The enzyme catalyses L-thyroxine(out) = L-thyroxine(in). It catalyses the reaction prostaglandin E2(out) = prostaglandin E2(in). It carries out the reaction (4E,15E)-bilirubin IXalpha C8-beta-D-glucuronoside(out) = (4E,15E)-bilirubin IXalpha C8-beta-D-glucuronoside(in). The catalysed reaction is bilirubin IXalpha bis-beta-D-glucuronoside(out) = bilirubin IXalpha bis-beta-D-glucuronoside(in). Its function is as follows. Mediates the Na(+)-independent uptake of organic anions. Shows broad substrate specificity, can transport both organic anions such as bile acid taurocholate (cholyltaurine) and conjugated steroids (17-beta-glucuronosyl estradiol, dehydroepiandrosterone sulfate (DHEAS), and estrone 3-sulfate), as well as eicosanoid leukotriene C4, prostaglandin E2 and L-thyroxine (T4). Hydrogencarbonate/HCO3(-) acts as the probable counteranion that exchanges for organic anions. Shows a pH-sensitive substrate specificity towards sulfated steroids, taurocholate and T4 which may be ascribed to the protonation state of the binding site and leads to a stimulation of substrate transport in an acidic microenvironment. Involved in the clearance of bile acids and organic anions from the liver. Can take up bilirubin glucuronides from plasma into the liver, contributing to the detoxification-enhancing liver-blood shuttling loop. Transports coproporphyrin I and III, by-products of heme synthesis, and may be involved in their hepatic disposition. May contribute to regulate the transport of organic compounds in testes across the blood-testis-barrier. Can transport HMG-CoA reductase inhibitors (also known as statins) such as pitavastatin, a clinically important class of hypolipidemic drugs. May play an important role in plasma and tissue distribution of the structurally diverse chemotherapeutic drugs methotrexate and paclitaxel. May also transport antihypertension agents, such as the angiotensin-converting enzyme (ACE) inhibitor prodrug enalapril, and the highly selective angiotensin II AT1-receptor antagonist valsartan, in the liver. The polypeptide is Solute carrier organic anion transporter family member 1B3 (SLCO1B3) (Homo sapiens (Human)).